The sequence spans 145 residues: Transcriptional regulator MraZ (145 aa).

2 SpoVT-AbrB domains span residues 5-50 and 81-124; these read TFNH…ALPQ and AHEV…DKAA.

It belongs to the MraZ family. As to quaternary structure, forms oligomers.

It is found in the cytoplasm. It localises to the nucleoid. The protein is Transcriptional regulator MraZ of Anaeromyxobacter sp. (strain Fw109-5).